Consider the following 507-residue polypeptide: ATP synthase subunit alpha, mitochondrial (507 aa).

171-178 contributes to the ATP binding site; it reads GDRQTGKT.

Belongs to the ATPase alpha/beta chains family. In terms of assembly, F-type ATPases have 2 components, CF(1) - the catalytic core - and CF(0) - the membrane proton channel. CF(1) has five subunits: alpha(3), beta(3), gamma(1), delta(1), epsilon(1). CF(0) has three main subunits: a, b and c.

The protein localises to the mitochondrion. The protein resides in the mitochondrion inner membrane. Mitochondrial membrane ATP synthase (F(1)F(0) ATP synthase or Complex V) produces ATP from ADP in the presence of a proton gradient across the membrane which is generated by electron transport complexes of the respiratory chain. F-type ATPases consist of two structural domains, F(1) - containing the extramembraneous catalytic core, and F(0) - containing the membrane proton channel, linked together by a central stalk and a peripheral stalk. During catalysis, ATP synthesis in the catalytic domain of F(1) is coupled via a rotary mechanism of the central stalk subunits to proton translocation. Subunits alpha and beta form the catalytic core in F(1). Rotation of the central stalk against the surrounding alpha(3)beta(3) subunits leads to hydrolysis of ATP in three separate catalytic sites on the beta subunits. Subunit alpha does not bear the catalytic high-affinity ATP-binding sites. This chain is ATP synthase subunit alpha, mitochondrial (ATPA), found in Pisum sativum (Garden pea).